The following is a 22-amino-acid chain: Brevinin-1OKc (22 aa).

Position 22 is a lysine amide (K22).

Expressed by the skin glands.

The protein localises to the secreted. Functionally, antimicrobial peptide. Active against Gram-negative bacterium E.coli (MIC=6 uM) and against Gram-positive bacterium S.aureus (MIC=12.5 uM). The polypeptide is Brevinin-1OKc (Nidirana okinavana (Kampira Falls frog)).